The primary structure comprises 136 residues: Histone H3 (136 aa).

Residues M1 to K43 form a disordered region. K5 and K10 each carry N6,N6,N6-trimethyllysine; alternate. At K5 the chain carries N6,N6-dimethyllysine; alternate. At K5 the chain carries N6-methyllysine; alternate. K10 is subject to N6-acetyllysine; alternate. Phosphoserine is present on S11. K15 bears the N6,N6-dimethyllysine; alternate mark. N6-methyllysine; alternate occurs at positions 15, 19, 24, 28, and 37. N6-acetyllysine; alternate is present on residues K15, K19, K24, K28, and K37. 2 positions are modified to N6,N6,N6-trimethyllysine; alternate: K28 and K37. N6,N6-dimethyllysine; alternate occurs at positions 28 and 37. N6-acetyllysine is present on residues K57 and K65. K80 is subject to N6,N6,N6-trimethyllysine; alternate. The residue at position 80 (K80) is an N6,N6-dimethyllysine; alternate. The residue at position 80 (K80) is an N6-methyllysine; alternate.

This sequence belongs to the histone H3 family. As to quaternary structure, the nucleosome is a histone octamer containing two molecules each of H2A, H2B, H3 and H4 assembled in one H3-H4 heterotetramer and two H2A-H2B heterodimers. The octamer wraps approximately 147 bp of DNA. In terms of processing, phosphorylated to form H3S10ph. H3S10ph promotes subsequent H3K14ac formation and is required for transcriptional activation through TBP recruitment to the promoters. Post-translationally, mono-, di- and trimethylated by the COMPASS complex to form H3K4me1/2/3. H3K4me activates gene expression by regulating transcription elongation and plays a role in telomere length maintenance. H3K4me enrichment correlates with transcription levels, and occurs in a 5' to 3' gradient with H3K4me3 enrichment at the 5'-end of genes, shifting to H3K4me2 and then H3K4me1. Trimethylated by methyltransferase dim-5 to form H3K9me3. H3K9me3, but not H3K9me2, marks chromatin regions for cytosine methylation. Methylated by set-2 to form H3K36me. H3K36me represses gene expression. Methylated by dot-1 to form H3K79me. H3K79me is required for association of SIR proteins with telomeric regions and for telomeric silencing. The COMPASS-mediated formation of H3K4me2/3 and the dot-1-mediated formation of H3K79me require H2BK123ub1. Acetylation of histone H3 leads to transcriptional activation. H3K14ac formation by gcn-5 is promoted by H3S10ph. H3K14ac can also be formed by esa-1. H3K56ac formation occurs predominantly in newly synthesized H3 molecules during G1, S and G2/M of the cell cycle and may be involved in DNA repair.

The protein resides in the nucleus. It is found in the chromosome. In terms of biological role, core component of nucleosome. Nucleosomes wrap and compact DNA into chromatin, limiting DNA accessibility to the cellular machineries which require DNA as a template. Histones thereby play a central role in transcription regulation, DNA repair, DNA replication and chromosomal stability. DNA accessibility is regulated via a complex set of post-translational modifications of histones, also called histone code, and nucleosome remodeling. This chain is Histone H3 (hh3), found in Neurospora crassa (strain ATCC 24698 / 74-OR23-1A / CBS 708.71 / DSM 1257 / FGSC 987).